We begin with the raw amino-acid sequence, 399 residues long: Succinate--CoA ligase [ADP-forming] subunit beta (399 aa).

The region spanning 9-254 (KAVLQPFGVS…ETEEDAKEIE (246 aa)) is the ATP-grasp domain. ATP-binding positions include Lys46, 53–55 (GRG), Glu109, Ser112, and Glu117. Asn209 and Asp223 together coordinate Mg(2+). Substrate contacts are provided by residues Asn274 and 331-333 (GIM).

The protein belongs to the succinate/malate CoA ligase beta subunit family. As to quaternary structure, heterotetramer of two alpha and two beta subunits. It depends on Mg(2+) as a cofactor.

It carries out the reaction succinate + ATP + CoA = succinyl-CoA + ADP + phosphate. The catalysed reaction is GTP + succinate + CoA = succinyl-CoA + GDP + phosphate. The protein operates within carbohydrate metabolism; tricarboxylic acid cycle; succinate from succinyl-CoA (ligase route): step 1/1. In terms of biological role, succinyl-CoA synthetase functions in the citric acid cycle (TCA), coupling the hydrolysis of succinyl-CoA to the synthesis of either ATP or GTP and thus represents the only step of substrate-level phosphorylation in the TCA. The beta subunit provides nucleotide specificity of the enzyme and binds the substrate succinate, while the binding sites for coenzyme A and phosphate are found in the alpha subunit. The polypeptide is Succinate--CoA ligase [ADP-forming] subunit beta (Rhodopseudomonas palustris (strain BisB18)).